Consider the following 511-residue polypeptide: Myrosinase 4 (511 aa).

Residues 1–23 (MAIPKAHYSLAVLVLLFVVVSSS) form the signal peptide. Cystine bridges form between Cys31-Cys450, Cys39-Cys445, and Cys230-Cys233. N-linked (GlcNAc...) asparagine glycans are attached at residues Asn46 and Asn53. A beta-D-glucoside contacts are provided by residues Gln64, His165, and 210-211 (NQ). A beta-D-glucoside-binding residues include Tyr351 and Glu418. Glu418 functions as the Nucleophile in the catalytic mechanism. N-linked (GlcNAc...) asparagine glycosylation occurs at Asn428. A beta-D-glucoside contacts are provided by residues Trp467, 474–475 (EF), and Phe483. An N-linked (GlcNAc...) asparagine glycan is attached at Asn489.

It belongs to the glycosyl hydrolase 1 family. In terms of tissue distribution, specifically expressed in roots.

It catalyses the reaction a thioglucoside + H2O = a sugar + a thiol.. The catalysed reaction is Hydrolysis of terminal, non-reducing beta-D-glucosyl residues with release of beta-D-glucose.. Hydrolyzes sinigrin and, with lower efficiency, p-nitrophenyl beta-D-glucoside. In Arabidopsis thaliana (Mouse-ear cress), this protein is Myrosinase 4.